We begin with the raw amino-acid sequence, 315 residues long: MKQSLLSVLTKKSLRLLAALFLVVTSVFSLPQAAQAFPIYAQQAYDSPREANGRIVCANCHLAAKPTQVEVPQAVLPDTVFEAVIKIPYDTDAQQVLGSGDLGPLNVGAVLMLPDGFQIAPDDRIPEKMKEEINGVFYQKYKPDTDNVIVVGPLSGADHQEIIFPVLSPDPATDPNIHFGKYSVHAGGNRGRGQIYPTGDKTNVNAVTSPAAGLVSSVSENSVTITTNDGQTVTESIPAGLEVVVSEGQAVADGAPLSSDPNVGGFGQKDTEIVLQSGTRIKWLMVFFSAIMISQTLLVLKKKQVEKVQAAEMNF.

The N-terminal stretch at 1-36 is a signal peptide; sequence MKQSLLSVLTKKSLRLLAALFLVVTSVFSLPQAAQA. Heme contacts are provided by Phe-37, Cys-57, Cys-60, and His-61. The helical transmembrane segment at 281-301 threads the bilayer; that stretch reads IKWLMVFFSAIMISQTLLVLK.

It belongs to the cytochrome f family. The 4 large subunits of the cytochrome b6-f complex are cytochrome b6, subunit IV (17 kDa polypeptide, PetD), cytochrome f and the Rieske protein, while the 4 small subunits are PetG, PetL, PetM and PetN. The complex functions as a dimer. Requires heme as cofactor.

The protein localises to the cellular thylakoid membrane. In terms of biological role, component of the cytochrome b6-f complex, which mediates electron transfer between photosystem II (PSII) and photosystem I (PSI), cyclic electron flow around PSI, and state transitions. In Acaryochloris marina (strain MBIC 11017), this protein is Cytochrome f.